Here is a 159-residue protein sequence, read N- to C-terminus: Serine-protein kinase RsbW (159 aa).

It belongs to the anti-sigma-factor family.

The enzyme catalyses L-seryl-[protein] + ATP = O-phospho-L-seryl-[protein] + ADP + H(+). The catalysed reaction is L-threonyl-[protein] + ATP = O-phospho-L-threonyl-[protein] + ADP + H(+). Negative regulator of sigma-B activity. Phosphorylates and inactivates its specific antagonist protein, RsbV. Upon phosphorylation of RsbV, RsbW is released and binds to sigma-B, thereby blocking its ability to form an RNA polymerase holoenzyme (E-sigma-B). The sequence is that of Serine-protein kinase RsbW from Staphylococcus aureus.